The primary structure comprises 565 residues: NAD-dependent malic enzyme (565 aa).

Tyr104 acts as the Proton donor in catalysis. Arg157 lines the NAD(+) pocket. Residue Lys175 is the Proton acceptor of the active site. A divalent metal cation-binding residues include Glu246, Asp247, and Asp270. Residues Asp270 and Asn418 each contribute to the NAD(+) site.

It belongs to the malic enzymes family. Homotetramer. Mg(2+) serves as cofactor. Requires Mn(2+) as cofactor.

It catalyses the reaction (S)-malate + NAD(+) = pyruvate + CO2 + NADH. It carries out the reaction oxaloacetate + H(+) = pyruvate + CO2. The protein is NAD-dependent malic enzyme of Klebsiella pneumoniae (strain 342).